A 394-amino-acid polypeptide reads, in one-letter code: Ornithine aminotransferase 1 (394 aa).

N6-(pyridoxal phosphate)lysine is present on Lys252.

It belongs to the class-III pyridoxal-phosphate-dependent aminotransferase family. OAT subfamily. The cofactor is pyridoxal 5'-phosphate.

Its subcellular location is the cytoplasm. It carries out the reaction a 2-oxocarboxylate + L-ornithine = L-glutamate 5-semialdehyde + an L-alpha-amino acid. The protein operates within amino-acid biosynthesis; L-proline biosynthesis; L-glutamate 5-semialdehyde from L-ornithine: step 1/1. In terms of biological role, catalyzes the interconversion of ornithine to glutamate semialdehyde. This chain is Ornithine aminotransferase 1, found in Staphylococcus aureus (strain Mu50 / ATCC 700699).